Reading from the N-terminus, the 150-residue chain is Transcription antitermination protein NusB (150 aa).

It belongs to the NusB family.

Involved in transcription antitermination. Required for transcription of ribosomal RNA (rRNA) genes. Binds specifically to the boxA antiterminator sequence of the ribosomal RNA (rrn) operons. The polypeptide is Transcription antitermination protein NusB (Alcanivorax borkumensis (strain ATCC 700651 / DSM 11573 / NCIMB 13689 / SK2)).